Here is a 216-residue protein sequence, read N- to C-terminus: MGKDNKKQTMLDQAQPRLQVEGLAGRRGERLLFKNMNFTVDMGEVLEVSGHNGSGKTTLLRLLCGLLLPEEGTLQWRGQPINKIRPLYHSELSYVGHTDAIKGELTAHENLMIAGALNGGGIDPEQALERVGLTTIRELPGRFLSAGQRRRLALARLLVNRAWLWLLDEPFTALDKVAIRTIATLLEEHAAAGGIAIFTSHHAINIAHARTLEISA.

The 199-residue stretch at 18 to 216 folds into the ABC transporter domain; it reads LQVEGLAGRR…AHARTLEISA (199 aa). 50 to 57 provides a ligand contact to ATP; sequence GHNGSGKT.

It belongs to the ABC transporter superfamily. CcmA exporter (TC 3.A.1.107) family. The complex is composed of two ATP-binding proteins (CcmA) and two transmembrane proteins (CcmB).

The protein resides in the cell inner membrane. It carries out the reaction heme b(in) + ATP + H2O = heme b(out) + ADP + phosphate + H(+). Functionally, part of the ABC transporter complex CcmAB involved in the biogenesis of c-type cytochromes; once thought to export heme, this seems not to be the case, but its exact role is uncertain. Responsible for energy coupling to the transport system. The protein is Cytochrome c biogenesis ATP-binding export protein CcmA of Nitrosococcus oceani (strain ATCC 19707 / BCRC 17464 / JCM 30415 / NCIMB 11848 / C-107).